The following is a 713-amino-acid chain: KNR4/SMI1 homolog (713 aa).

4 disordered regions span residues 18–129, 255–274, 400–457, and 500–713; these read PDRY…VTRD, IFINPNAGSPNSSTPGSPVA, RHQM…SKPA, and EPLE…KGKK. Positions 22 to 34 are enriched in low complexity; that stretch reads ASQQRSSKASQSA. Residues 35–65 show a composition bias toward polar residues; sequence GANSQNRPLYNNDDNQSEMYQASSSYTGGYT. Composition is skewed to low complexity over residues 66–81 and 88–103; these read NSPSASSSNLAGGAAA and SSRNNSTTNFSASSTS. Positions 260–270 are enriched in polar residues; the sequence is NAGSPNSSTPG. Over residues 400-412 the composition is skewed to basic and acidic residues; it reads RHQMQRREHERRQ. The segment covering 413–429 has biased composition (low complexity); it reads AAAAAQQQQQQQQHHAQ. 2 stretches are compositionally biased toward basic and acidic residues: residues 507–605 and 613–662; these read EIKG…EEQK and AKAE…KIDE. The span at 663-686 shows a compositional bias: acidic residues; sequence ENGNAEEADEEADDDDEDDEEEGD. A compositionally biased stretch (basic residues) spans 701–713; that stretch reads SKSKKKNKKKGKK.

The protein belongs to the KNR4/SMI1 family.

This chain is KNR4/SMI1 homolog, found in Yarrowia lipolytica (strain CLIB 122 / E 150) (Yeast).